The primary structure comprises 139 residues: S-adenosyl-L-methionine-binding protein AF_0241 (139 aa).

Residues 3–133 (LKPIGVVKSP…YSPEIDCVNQ (131 aa)) form the TsaA-like domain. S-adenosyl-L-methionine is bound by residues Gln16, 20–22 (PRQ), 58–59 (DK), Arg82, Leu92, and 113–116 (LDGS).

The protein belongs to the tRNA methyltransferase O family. Homodimer.

This is S-adenosyl-L-methionine-binding protein AF_0241 from Archaeoglobus fulgidus (strain ATCC 49558 / DSM 4304 / JCM 9628 / NBRC 100126 / VC-16).